The following is a 130-amino-acid chain: Metastasis-suppressor KiSS-1 (130 aa).

Positions 1–19 are cleaved as a signal peptide; it reads MISMASWQLLLLLCVATYG. The segment at 49-82 is disordered; that stretch reads KESRYAESKPGSAGLRARRSSPCPPVEGPAGRQR. C71 and C85 form a disulfide bridge. At Y110 the chain carries Phosphotyrosine. Positions 110-119 are essential for receptor binding and receptor activation; the sequence is YNWNSFGLRY. The residue at position 119 (Y119) is a Tyrosine amide.

This sequence belongs to the KISS1 family. As to expression, weak in all tissue types with highest levels in lung and 15- 17-day embryos. Expressed in areas of the hypothalamus implicated in the neuroendocrine regulation of gonadotropin secretion, including the anteroventral periventricular nucleus, the periventricular nucleus, and the arcuate nucleus.

The protein localises to the secreted. In terms of biological role, metastasis suppressor protein. May regulate events downstream of cell-matrix adhesion, perhaps involving cytoskeletal reorganization. Generates a C-terminally amidated peptide, metastin which functions as the endogenous ligand of the G-protein coupled receptor GPR54. Activation of the receptor inhibits cell proliferation and cell migration, key characteristics of tumor metastasis. The receptor is also essential for normal gonadotropin-released hormone physiology and for puberty. The hypothalamic KiSS1/GPR54 system is a pivotal factor in central regulation of the gonadotropic axis at puberty and in adulthood. Intracerebroventricular administration induces an increase in serum LH and FSH levels in prepubertal male and female as well as in adult animals. This is Metastasis-suppressor KiSS-1 (Kiss1) from Mus musculus (Mouse).